The primary structure comprises 156 residues: uncharacterized protein (156 aa).

2 helical membrane-spanning segments follow: residues 46-66 (GLVL…AGVV) and 114-134 (IIDI…IVAL).

The protein resides in the cell membrane. This is an uncharacterized protein from Haemophilus influenzae (strain ATCC 51907 / DSM 11121 / KW20 / Rd).